Consider the following 200-residue polypeptide: Probable GTP-binding protein EngB (200 aa).

The EngB-type G domain maps to 22–197 (NLPEYAFIGR…LDYIDSINRS (176 aa)). GTP is bound by residues 30–37 (GRSNVGKS), 57–61 (GKTLL), 75–78 (DLPG), 142–145 (TKAD), and 173–178 (HFVSSS). Residues Ser-37 and Thr-59 each coordinate Mg(2+).

This sequence belongs to the TRAFAC class TrmE-Era-EngA-EngB-Septin-like GTPase superfamily. EngB GTPase family. It depends on Mg(2+) as a cofactor.

Functionally, necessary for normal cell division and for the maintenance of normal septation. The sequence is that of Probable GTP-binding protein EngB from Phocaeicola vulgatus (strain ATCC 8482 / DSM 1447 / JCM 5826 / CCUG 4940 / NBRC 14291 / NCTC 11154) (Bacteroides vulgatus).